Here is a 182-residue protein sequence, read N- to C-terminus: Gas vesicle protein H1 (182 aa).

Positions 1–11 (MVPDENDDASD) are enriched in acidic residues. 2 disordered regions span residues 1 to 21 (MVPDENDDASDDQSSQLSGLL) and 65 to 106 (GRAD…GGTS). The segment covering 12 to 21 (DQSSQLSGLL) has biased composition (low complexity). The segment covering 92–101 (TTEDSIHVET) has biased composition (basic and acidic residues).

The protein belongs to the gas vesicle GvpH family. In terms of assembly, gvpF to GvpM interact with each other in vitro, and may form multi-subunit complex(es). Interacts with GvpC1. Might interact with GvpA1.

Its subcellular location is the cytoplasm. It localises to the gas vesicle. In terms of biological role, proteins GvpF to GvpM might be involved in nucleating gas vesicle formation. May be important for the stability of gas vesicles. Gas vesicles are hollow, gas filled proteinaceous nanostructures found in several microbial planktonic microorganisms. They allow positioning of halobacteria at the optimal depth for growth in the poorly aerated, shallow brine pools of their habitat. Expression of a 9.5 kb p-vac DNA fragment containing 2 divergently transcribed regions (gvpD-gvpE-gvpF-gvpG-gvpH-gvpI-gvpJ-gvpK-gvpL-gvpM and gvpA-gvpC-gvpN-gvpO) allows H.volcanii to produce gas vesicles. A similar region restores gas vesicle production in H.halobium without the p-vac locus, but it still has the c-vac locus. This chain is Gas vesicle protein H1 (gvpH11), found in Halobacterium salinarum (strain ATCC 700922 / JCM 11081 / NRC-1) (Halobacterium halobium).